We begin with the raw amino-acid sequence, 354 residues long: Arginase-2, mitochondrial (354 aa).

Residues 1 to 22 constitute a mitochondrion transit peptide; sequence MSLRSHLSRLLRTQVHSVRKKS. 4 residues coordinate Mn(2+): His-120, Asp-143, His-145, and Asp-147. Substrate-binding positions include 145–149, 156–158, and Asp-202; these read HADIN and SGN. The Mn(2+) site is built by Asp-251 and Asp-253. The substrate site is built by Thr-265 and Glu-296. Positions 332 to 354 are disordered; that stretch reads IVYDQLPTPSSPDESESEERVRI.

This sequence belongs to the arginase family. Homotrimer. Mn(2+) is required as a cofactor.

It localises to the mitochondrion. The catalysed reaction is L-arginine + H2O = urea + L-ornithine. It functions in the pathway nitrogen metabolism; urea cycle; L-ornithine and urea from L-arginine: step 1/1. May play a role in the regulation of extra-urea cycle arginine metabolism and also in down-regulation of nitric oxide synthesis. Extrahepatic arginase functions to regulate L-arginine bioavailability to nitric oxid synthase (NOS). Arginine metabolism is a critical regulator of innate and adaptive immune responses. Seems to be involved in negative regulation of the survival capacity of activated T cells. May suppress inflammation-related signaling in asthmatic airway epithelium. May play a role in promoting prenatal immune suppression. Regulates RPS6KB1 signaling, which promotes endothelial cell senescence and inflammation and implicates NOS3/eNOS dysfunction. Can inhibit endothelial autophagy independently of its enzymatic activity implicating mTORC2 signaling. Involved in vascular smooth muscle cell senescence and apoptosis independently of its enzymatic activity. This Bos taurus (Bovine) protein is Arginase-2, mitochondrial (ARG2).